Reading from the N-terminus, the 1770-residue chain is Transposon Ty2-OR1 Gag-Pol polyprotein (1770 aa).

2 stretches are compositionally biased toward polar residues: residues 1-39 (MESQ…SASN) and 49-60 (KVNSQQETTPGT). Disordered regions lie at residues 1–88 (MESQ…YQQH) and 359–449 (QHSE…SNDE). Positions 295 to 397 (ENNINVSDRL…SSKPRAAKAH (103 aa)) are RNA-binding. Residues 369–381 (TSPNTTNTKVTTR) show a composition bias toward low complexity. Composition is skewed to polar residues over residues 399–408 (IATSSKFSRV) and 415–435 (ESTV…GQQQ). Residue aspartate 457 is the For protease activity; shared with dimeric partner of the active site. The segment at 579–636 (NVNKSKSVNKYPYPLIHRMLGHANFRSIQKSLKKNAVTYLKESDIEWSNASTYQCPDC) is integrase-type zinc finger-like. Residues 656–831 (ESYEPFQYLH…AGLDITTILP (176 aa)) form the Integrase catalytic domain. Residues aspartate 667 and aspartate 732 each coordinate Mg(2+). 3 stretches are compositionally biased toward polar residues: residues 916-929 (FIEQ…YDQN), 1009-1024 (ESDT…FTAR), and 1065-1082 (QRNS…STPS). 3 disordered regions span residues 916–935 (FIEQ…SDHD), 1005–1038 (GGTI…MIDL), and 1057–1205 (GGTE…TEIE). Residues 1193–1227 (KKRSLEDNETEIEVSRDTWNNKNMRSLEPPRSKKR) carry the Bipartite nuclear localization signal motif. A Reverse transcriptase Ty1/copia-type domain is found at 1353 to 1491 (NDYYITQLDI…DILGLEIKYQ (139 aa)). Mg(2+)-binding residues include aspartate 1361, aspartate 1442, aspartate 1443, aspartate 1625, glutamate 1667, and aspartate 1700. The 143-residue stretch at 1625–1767 (DASYGNQPYY…IKTFKLLTNK (143 aa)) folds into the RNase H Ty1/copia-type domain.

The capsid protein forms a homotrimer, from which the VLPs are assembled. The protease is a homodimer, whose active site consists of two apposed aspartic acid residues. Post-translationally, initially, virus-like particles (VLPs) are composed of the structural unprocessed proteins Gag and Gag-Pol, and also contain the host initiator methionine tRNA (tRNA(i)-Met) which serves as a primer for minus-strand DNA synthesis, and a dimer of genomic Ty RNA. Processing of the polyproteins occurs within the particle and proceeds by an ordered pathway, called maturation. First, the protease (PR) is released by autocatalytic cleavage of the Gag-Pol polyprotein, and this cleavage is a prerequisite for subsequent processing at the remaining sites to release the mature structural and catalytic proteins. Maturation takes place prior to the RT reaction and is required to produce transposition-competent VLPs.

It is found in the cytoplasm. The protein localises to the nucleus. It carries out the reaction DNA(n) + a 2'-deoxyribonucleoside 5'-triphosphate = DNA(n+1) + diphosphate. The enzyme catalyses Endonucleolytic cleavage to 5'-phosphomonoester.. Functionally, capsid protein (CA) is the structural component of the virus-like particle (VLP), forming the shell that encapsulates the retrotransposons dimeric RNA genome. The particles are assembled from trimer-clustered units and there are holes in the capsid shells that allow for the diffusion of macromolecules. CA also has nucleocapsid-like chaperone activity, promoting primer tRNA(i)-Met annealing to the multipartite primer-binding site (PBS), dimerization of Ty2 RNA and initiation of reverse transcription. The aspartyl protease (PR) mediates the proteolytic cleavages of the Gag and Gag-Pol polyproteins after assembly of the VLP. Its function is as follows. Reverse transcriptase/ribonuclease H (RT) is a multifunctional enzyme that catalyzes the conversion of the retro-elements RNA genome into dsDNA within the VLP. The enzyme displays a DNA polymerase activity that can copy either DNA or RNA templates, and a ribonuclease H (RNase H) activity that cleaves the RNA strand of RNA-DNA heteroduplexes during plus-strand synthesis and hydrolyzes RNA primers. The conversion leads to a linear dsDNA copy of the retrotransposon that includes long terminal repeats (LTRs) at both ends. In terms of biological role, integrase (IN) targets the VLP to the nucleus, where a subparticle preintegration complex (PIC) containing at least integrase and the newly synthesized dsDNA copy of the retrotransposon must transit the nuclear membrane. Once in the nucleus, integrase performs the integration of the dsDNA into the host genome. The protein is Transposon Ty2-OR1 Gag-Pol polyprotein (TY2B-OR1) of Saccharomyces cerevisiae (strain ATCC 204508 / S288c) (Baker's yeast).